Reading from the N-terminus, the 224-residue chain is Adenylate kinase (224 aa).

10 to 15 contributes to the ATP binding site; sequence GSGKGT. Positions 30–59 are NMP; that stretch reads ESGAIFRDNIKGGTDLGMKAKAYIDKGDLV. Residues Ser31, Arg36, 57-59, 85-88, and Gln92 each bind AMP; these read DLV and GFPR. The tract at residues 126–165 is LID; the sequence is GRRLCENDNNHPNNIFIDAIKPNGDKCRVCGGALSSRADD. Arg127 is an ATP binding site. Residues Arg162 and Arg174 each coordinate AMP. Asn211 contributes to the ATP binding site.

This sequence belongs to the adenylate kinase family. In terms of assembly, monomer.

It localises to the cytoplasm. It carries out the reaction AMP + ATP = 2 ADP. It participates in purine metabolism; AMP biosynthesis via salvage pathway; AMP from ADP: step 1/1. Functionally, catalyzes the reversible transfer of the terminal phosphate group between ATP and AMP. Plays an important role in cellular energy homeostasis and in adenine nucleotide metabolism. In Desulforapulum autotrophicum (strain ATCC 43914 / DSM 3382 / VKM B-1955 / HRM2) (Desulfobacterium autotrophicum), this protein is Adenylate kinase.